The following is a 307-amino-acid chain: Methionyl-tRNA formyltransferase (307 aa).

(6S)-5,6,7,8-tetrahydrofolate is bound at residue 108–111 (SLLP).

It belongs to the Fmt family.

The enzyme catalyses L-methionyl-tRNA(fMet) + (6R)-10-formyltetrahydrofolate = N-formyl-L-methionyl-tRNA(fMet) + (6S)-5,6,7,8-tetrahydrofolate + H(+). In terms of biological role, attaches a formyl group to the free amino group of methionyl-tRNA(fMet). The formyl group appears to play a dual role in the initiator identity of N-formylmethionyl-tRNA by promoting its recognition by IF2 and preventing the misappropriation of this tRNA by the elongation apparatus. This chain is Methionyl-tRNA formyltransferase, found in Xanthomonas euvesicatoria pv. vesicatoria (strain 85-10) (Xanthomonas campestris pv. vesicatoria).